The sequence spans 438 residues: MQTIYTKITDIKGNLITVEAEGASLGELVQIERADGRSSYASVLRFDARKVTLQVFGGTSGLSTGDKVIFLGRPMEVIYGDSLLGRRFNGTGKPIDREDECFGEPIPITTPSFNPVCRIVPREMVRTNIPMIDMFNCLVKSQKIPIFSSSGENHNALLMRIAAQTDADIVIIGGMGLTFVDYNFFVKESQRLGFADKCVMFIHKAVDAPVECVLIPDMALACAERFALEQKKNVLVLLTDMTAFADALKEMAITMDQIPANRGYPGSLYSDLAVRYEKAVDIAQGGSITLISVTTMPGDDITHPVPDNTGFITEGQFYLKDNRIDPFGSLSRLKQLVIGKKTREDHGDLANALIRLYADSRKSAERMSMGFKLSNWDKKLLAFSELFEARLMSLEVNIPLEEALDIGWKILYQSFHSEEVGIKEQLIQKYWPKACLHK.

This sequence belongs to the ATPase alpha/beta chains family.

Functionally, produces ATP from ADP in the presence of a proton gradient across the membrane. The V-type beta chain is a regulatory subunit. This chain is V-type ATP synthase beta chain, found in Chlamydia trachomatis serovar A (strain ATCC VR-571B / DSM 19440 / HAR-13).